Consider the following 858-residue polypeptide: MSSVMETPHAGKLKKYEFTPIGYAEEKRKEGIDLLKENGLKRSLESGSDLPAERKRVRNPSVVDETFSSTRLFNDTSFDETVPEGIIQERRPNSRKNLVDDLLIKDQETTENLTSNPLKETESSLKKLQMENYNLRIKCTSLLKFLNNISDDGEIVKNLEILDELDDLKVRYRQLNLDYTALQKQCDRIEDQNDEHEDIAKLKESNDKLKEELRSTKENLIDTDAQLQQLKDTIKSLENKIFNMRTEQTEKECQHGMQVDLLQSKINETSTSLTSKERECSDLKEKIKWLTSQLQEFDHQSGSLLDLQSTLDSKNEAIRNLEAQLQRNEHQRQSLEREVSLLQEELSSIRETHQKIITHKDQQIKQLTENLSSSDSEAVKRLNELSSERLRLLETNKSLKFSEKDLKQTVKSLEDQLNSCQEELHASQDKHKEKVSELLRKQLPYTSSEVEAMRQELLEMRKSNDILKTENNSLSRRLDNLIRQSPSKKSVEVDIQRKNNEIRALRSTVKDLEHELQDVTSNVSKLKENHKEEIQKLRKQVNPDLPTDVLEEKSKLQNRISLLQMELNSIKDTKEKELAMWRRKYETIRRSNEELLQEGKDQSGQLSNILNEKDKEILQLQSRFNSLLTEKNSLLNELSKVRSHKDDYKEELKKNQSRLEFITKEFVKLKDASKQAENSEDAKDILNNKWYSKYQSMKDKFLGELKSLQDENLELQKSLLKQKANPNSTAEVFSKTTEKGTLKDEIDYYRLKYANEVKQNNDLKTMNQYLNRVLRASSQHVKLDILKLQNEVPVYNPYADIPFHNMRFSHQKIKFKTVALLVLSCIRMKTTIEARRWDRQRLDYLKRKIVLNQDNISW.

Residues 118–725 (LKETESSLKK…QKSLLKQKAN (608 aa)) are a coiled coil.

This sequence belongs to the SPC110 family. As to quaternary structure, homodimer.

The protein localises to the nucleus. It is found in the cytoplasm. Its subcellular location is the cytoskeleton. It localises to the microtubule organizing center. The protein resides in the spindle pole body. In terms of biological role, component of the spindle pole body (SPB) required for the proper execution of spindle pole body (SPB) duplication. Potential role in cross-linking filaments or anchoring other molecules. It is essential for growth. The chain is Spindle pole body component 110 (SPC110) from Kluyveromyces lactis (strain ATCC 8585 / CBS 2359 / DSM 70799 / NBRC 1267 / NRRL Y-1140 / WM37) (Yeast).